Consider the following 144-residue polypeptide: Putative pre-16S rRNA nuclease (144 aa).

It belongs to the YqgF nuclease family.

It localises to the cytoplasm. Its function is as follows. Could be a nuclease involved in processing of the 5'-end of pre-16S rRNA. The polypeptide is Putative pre-16S rRNA nuclease (Lacticaseibacillus casei (strain BL23) (Lactobacillus casei)).